A 260-amino-acid polypeptide reads, in one-letter code: Triosephosphate isomerase (260 aa).

11–13 lines the substrate pocket; that stretch reads NWK. Residue His103 is the Electrophile of the active site. Glu175 functions as the Proton acceptor in the catalytic mechanism. Substrate is bound by residues Gly181, Ser220, and 241 to 242; that span reads GG.

Belongs to the triosephosphate isomerase family. As to quaternary structure, homodimer.

The protein localises to the cytoplasm. It catalyses the reaction D-glyceraldehyde 3-phosphate = dihydroxyacetone phosphate. The protein operates within carbohydrate biosynthesis; gluconeogenesis. It participates in carbohydrate degradation; glycolysis; D-glyceraldehyde 3-phosphate from glycerone phosphate: step 1/1. Functionally, involved in the gluconeogenesis. Catalyzes stereospecifically the conversion of dihydroxyacetone phosphate (DHAP) to D-glyceraldehyde-3-phosphate (G3P). The protein is Triosephosphate isomerase of Shewanella amazonensis (strain ATCC BAA-1098 / SB2B).